Reading from the N-terminus, the 123-residue chain is Ribosome-binding factor A (123 aa).

The protein belongs to the RbfA family. In terms of assembly, monomer. Binds 30S ribosomal subunits, but not 50S ribosomal subunits or 70S ribosomes.

The protein localises to the cytoplasm. Functionally, one of several proteins that assist in the late maturation steps of the functional core of the 30S ribosomal subunit. Associates with free 30S ribosomal subunits (but not with 30S subunits that are part of 70S ribosomes or polysomes). Required for efficient processing of 16S rRNA. May interact with the 5'-terminal helix region of 16S rRNA. This Syntrophus aciditrophicus (strain SB) protein is Ribosome-binding factor A.